A 423-amino-acid polypeptide reads, in one-letter code: uncharacterized protein (423 aa).

Belongs to the mycobacterial PPE family.

Its function is as follows. Could be required for host endothelial-cell invasion and/or intracellular survival. This is an uncharacterized protein from Mycobacterium tuberculosis (strain CDC 1551 / Oshkosh).